A 622-amino-acid chain; its full sequence is Phosphoenolpyruvate carboxykinase [GTP] (622 aa).

Residues Arg86 and 220-222 each bind substrate; that span reads YGG. Residues Lys229 and His248 each coordinate Mn(2+). Ser270 provides a ligand contact to substrate. 271-276 contributes to the GTP binding site; that stretch reads MCGKTS. Cys272 is an active-site residue. Residue Asp289 coordinates Mn(2+). A compositionally biased stretch (basic and acidic residues) spans 360–374; that stretch reads ENHSGKWWRGKKDSE. The disordered stretch occupies residues 360 to 381; that stretch reads ENHSGKWWRGKKDSEGNEISPS. A substrate-binding site is contributed by 384–386; that stretch reads NAR. Positions 386 and 418 each coordinate GTP.

This sequence belongs to the phosphoenolpyruvate carboxykinase [GTP] family. Mn(2+) is required as a cofactor.

The protein localises to the cytoplasm. The catalysed reaction is oxaloacetate + GTP = phosphoenolpyruvate + GDP + CO2. It participates in carbohydrate biosynthesis; gluconeogenesis. Functionally, catalyzes the conversion of oxaloacetate (OAA) to phosphoenolpyruvate (PEP), the rate-limiting step in the metabolic pathway that produces glucose from lactate and other precursors derived from the citric acid cycle. This Thermococcus sibiricus (strain DSM 12597 / MM 739) protein is Phosphoenolpyruvate carboxykinase [GTP].